Reading from the N-terminus, the 122-residue chain is MIQTETRLKVADNSGAREILTIKVLGGSGRKFANIGDIIVASVKQATPGGAVKKGDVVKAVIVRTKTGARRADGSYIKFDENAAVIIREDKNPRGTRIFGPVARELRDGGFMKIVSLAPEVL.

It belongs to the universal ribosomal protein uL14 family. In terms of assembly, part of the 50S ribosomal subunit. Forms a cluster with proteins L3 and L19. In the 70S ribosome, L14 and L19 interact and together make contacts with the 16S rRNA in bridges B5 and B8.

In terms of biological role, binds to 23S rRNA. Forms part of two intersubunit bridges in the 70S ribosome. This is Large ribosomal subunit protein uL14 from Streptococcus suis (strain 05ZYH33).